We begin with the raw amino-acid sequence, 305 residues long: Tyrosine recombinase XerC (305 aa).

Positions 2-88 (NQLELYIDTF…TLRSFYRFLE (87 aa)) constitute a Core-binding (CB) domain. Residues 109–294 (PVPGFLYQEE…TKDHLREAYM (186 aa)) form the Tyr recombinase domain. Residues Arg149, Lys173, His246, Arg249, and His272 contribute to the active site. Tyr281 functions as the O-(3'-phospho-DNA)-tyrosine intermediate in the catalytic mechanism.

The protein belongs to the 'phage' integrase family. XerC subfamily. As to quaternary structure, forms a cyclic heterotetrameric complex composed of two molecules of XerC and two molecules of XerD.

The protein localises to the cytoplasm. Functionally, site-specific tyrosine recombinase, which acts by catalyzing the cutting and rejoining of the recombining DNA molecules. The XerC-XerD complex is essential to convert dimers of the bacterial chromosome into monomers to permit their segregation at cell division. It also contributes to the segregational stability of plasmids. This is Tyrosine recombinase XerC from Oceanobacillus iheyensis (strain DSM 14371 / CIP 107618 / JCM 11309 / KCTC 3954 / HTE831).